A 446-amino-acid polypeptide reads, in one-letter code: Phosphoglucosamine mutase (446 aa).

The active-site Phosphoserine intermediate is the S103. Mg(2+) contacts are provided by S103, D242, D244, and D246. S103 is modified (phosphoserine).

It belongs to the phosphohexose mutase family. Requires Mg(2+) as cofactor. Post-translationally, activated by phosphorylation.

The catalysed reaction is alpha-D-glucosamine 1-phosphate = D-glucosamine 6-phosphate. Its function is as follows. Catalyzes the conversion of glucosamine-6-phosphate to glucosamine-1-phosphate. The polypeptide is Phosphoglucosamine mutase (Vibrio cholerae serotype O1 (strain ATCC 39315 / El Tor Inaba N16961)).